A 565-amino-acid polypeptide reads, in one-letter code: Membrane protein insertase YidC (565 aa).

6 consecutive transmembrane segments (helical) span residues 6 to 26, 348 to 368, 370 to 390, 437 to 457, 479 to 499, and 516 to 536; these read VLLI…WGKN, LMAL…SLLH, WGWA…PLSA, GGCF…WVLV, PYFI…KLTP, and PLIF…YWVI.

It belongs to the OXA1/ALB3/YidC family. Type 1 subfamily. Interacts with the Sec translocase complex via SecD. Specifically interacts with transmembrane segments of nascent integral membrane proteins during membrane integration.

Its subcellular location is the cell inner membrane. Required for the insertion and/or proper folding and/or complex formation of integral membrane proteins into the membrane. Involved in integration of membrane proteins that insert both dependently and independently of the Sec translocase complex, as well as at least some lipoproteins. Aids folding of multispanning membrane proteins. The sequence is that of Membrane protein insertase YidC from Xylella fastidiosa (strain M12).